Reading from the N-terminus, the 88-residue chain is Small ribosomal subunit protein uS15 (88 aa).

It belongs to the universal ribosomal protein uS15 family. In terms of assembly, part of the 30S ribosomal subunit. Forms a bridge to the 50S subunit in the 70S ribosome, contacting the 23S rRNA.

Its function is as follows. One of the primary rRNA binding proteins, it binds directly to 16S rRNA where it helps nucleate assembly of the platform of the 30S subunit by binding and bridging several RNA helices of the 16S rRNA. Forms an intersubunit bridge (bridge B4) with the 23S rRNA of the 50S subunit in the ribosome. This Geotalea uraniireducens (strain Rf4) (Geobacter uraniireducens) protein is Small ribosomal subunit protein uS15.